The primary structure comprises 236 residues: MHTLTLKRVLGFTIVILLLLALFIWGIGLETLKARQVDLLYLGQRHLMLVFTSMFFALLVGIPSGILLSRPAAKGFAEYVMQIFNVGNTLPPLAVLALAMVIIGIGDTPAIVALFLASLLPIVRNTYAGLCSVPASLIEAANGIGMTKWQRLRQVELPNAWPVMLSGIRIATAINVGTAPLAFLIGASSYGELIFPGIYLNDFPTLILGATATALFALILDTLLAWFGRRLSPHTV.

The next 6 helical transmembrane spans lie at V9–L29, L47–L67, V95–F115, T126–M146, P180–L200, and I207–F227. One can recognise an ABC transmembrane type-1 domain in the interval G43–L224.

This sequence belongs to the binding-protein-dependent transport system permease family. As to quaternary structure, the complex is composed of two ATP-binding proteins (OsmV), two transmembrane proteins (OsmW and OsmY) and a solute-binding protein (OsmX).

The protein localises to the cell inner membrane. Part of the OsmU ABC transporter complex, which is involved in the uptake of osmoprotectants such as choline-O-sulfate and glycine betaine. Probably responsible for the translocation of the substrate across the membrane. The polypeptide is Osmoprotectant import permease protein OsmY (osmY) (Salmonella typhimurium (strain LT2 / SGSC1412 / ATCC 700720)).